Consider the following 193-residue polypeptide: Large ribosomal subunit protein uL5 (193 aa).

This sequence belongs to the universal ribosomal protein uL5 family. As to quaternary structure, part of the 50S ribosomal subunit; part of the 5S rRNA/L5/L18/L25 subcomplex. Contacts the 5S rRNA and the P site tRNA. Forms a bridge to the 30S subunit in the 70S ribosome.

In terms of biological role, this is one of the proteins that bind and probably mediate the attachment of the 5S RNA into the large ribosomal subunit, where it forms part of the central protuberance. In the 70S ribosome it contacts protein S13 of the 30S subunit (bridge B1b), connecting the 2 subunits; this bridge is implicated in subunit movement. Contacts the P site tRNA; the 5S rRNA and some of its associated proteins might help stabilize positioning of ribosome-bound tRNAs. The sequence is that of Large ribosomal subunit protein uL5 from Rhizorhabdus wittichii (strain DSM 6014 / CCUG 31198 / JCM 15750 / NBRC 105917 / EY 4224 / RW1) (Sphingomonas wittichii).